A 171-amino-acid chain; its full sequence is Co-chaperone protein HscB (171 aa).

Residues 2-74 enclose the J domain; the sequence is DYFTLFGLPA…LMRAEYLLSL (73 aa).

It belongs to the HscB family. As to quaternary structure, interacts with HscA and stimulates its ATPase activity. Interacts with IscU.

Co-chaperone involved in the maturation of iron-sulfur cluster-containing proteins. Seems to help targeting proteins to be folded toward HscA. The chain is Co-chaperone protein HscB from Escherichia coli (strain SMS-3-5 / SECEC).